Reading from the N-terminus, the 503-residue chain is ATP synthase subunit alpha (503 aa).

170–177 serves as a coordination point for ATP; sequence GDKQTGKT.

Belongs to the ATPase alpha/beta chains family. As to quaternary structure, F-type ATPases have 2 components, CF(1) - the catalytic core - and CF(0) - the membrane proton channel. CF(1) has five subunits: alpha(3), beta(3), gamma(1), delta(1), epsilon(1). CF(0) has three main subunits: a(1), b(2) and c(9-12). The alpha and beta chains form an alternating ring which encloses part of the gamma chain. CF(1) is attached to CF(0) by a central stalk formed by the gamma and epsilon chains, while a peripheral stalk is formed by the delta and b chains.

The protein resides in the cell inner membrane. The enzyme catalyses ATP + H2O + 4 H(+)(in) = ADP + phosphate + 5 H(+)(out). Produces ATP from ADP in the presence of a proton gradient across the membrane. The alpha chain is a regulatory subunit. This Helicobacter pylori (strain J99 / ATCC 700824) (Campylobacter pylori J99) protein is ATP synthase subunit alpha.